The chain runs to 293 residues: ESX-3 secretion-associated protein EspG3 (293 aa).

This sequence belongs to the EspG family.

It is found in the cytoplasm. This is ESX-3 secretion-associated protein EspG3 from Mycolicibacterium smegmatis (strain ATCC 700084 / mc(2)155) (Mycobacterium smegmatis).